The following is a 1032-amino-acid chain: GPI inositol-deacylase (1032 aa).

Asparagine 12 is a glycosylation site (N-linked (GlcNAc...) asparagine). Residues 15–35 form a helical membrane-spanning segment; sequence ILTLVSFFGLVLFYLTWYLYT. Serine 195 is a catalytic residue. Residues asparagine 520 and asparagine 555 are each glycosylated (N-linked (GlcNAc...) asparagine). The next 2 membrane-spanning stretches (helical) occupy residues 703-723 and 740-760; these read LATI…QVKH and ICSP…TPIM. Asparagine 784 carries N-linked (GlcNAc...) asparagine glycosylation. Transmembrane regions (helical) follow at residues 805–825, 861–880, and 884–903; these read LWFI…LTFY, WANR…PIYM, and FAYV…ILVA. N-linked (GlcNAc...) asparagine glycosylation is present at asparagine 907. The helical transmembrane segment at 916–936 threads the bilayer; sequence SLLMLMLWVLPINVPILVVFV. Asparagine 938 and asparagine 942 each carry an N-linked (GlcNAc...) asparagine glycan. 2 consecutive transmembrane segments (helical) span residues 943-963 and 985-1005; these read WTTP…ILLM and AFLA…TYWI.

The protein belongs to the GPI inositol-deacylase family.

It localises to the endoplasmic reticulum membrane. Involved in inositol deacylation of GPI-anchored proteins which plays important roles in the quality control and ER-associated degradation of GPI-anchored proteins. The sequence is that of GPI inositol-deacylase (BST1) from Debaryomyces hansenii (strain ATCC 36239 / CBS 767 / BCRC 21394 / JCM 1990 / NBRC 0083 / IGC 2968) (Yeast).